Consider the following 240-residue polypeptide: 45 kDa antigen (240 aa).

2 consecutive Fibronectin type-III domains span residues 1 to 109 and 110 to 210; these read EFPD…FHTL and ANGT…KSGH.

This chain is 45 kDa antigen, found in Taenia ovis (Sheep tapeworm).